The primary structure comprises 732 residues: 1,4-alpha-glucan branching enzyme GlgB (732 aa).

Residue Asp-415 is the Nucleophile of the active site. Glu-468 functions as the Proton donor in the catalytic mechanism.

It belongs to the glycosyl hydrolase 13 family. GlgB subfamily. Monomer.

The enzyme catalyses Transfers a segment of a (1-&gt;4)-alpha-D-glucan chain to a primary hydroxy group in a similar glucan chain.. It functions in the pathway glycan biosynthesis; glycogen biosynthesis. In terms of biological role, catalyzes the formation of the alpha-1,6-glucosidic linkages in glycogen by scission of a 1,4-alpha-linked oligosaccharide from growing alpha-1,4-glucan chains and the subsequent attachment of the oligosaccharide to the alpha-1,6 position. This chain is 1,4-alpha-glucan branching enzyme GlgB, found in Nitrosomonas eutropha (strain DSM 101675 / C91 / Nm57).